A 20-amino-acid chain; its full sequence is Maximin-Hu (20 aa).

It belongs to the bombinin family. As to expression, expressed by the skin glands.

Its subcellular location is the secreted. Its function is as follows. Has antimicrobial activity. This is Maximin-Hu from Bombina maxima (Giant fire-bellied toad).